Consider the following 184-residue polypeptide: Peptide deformylase 2 (184 aa).

The Fe cation site is built by Cys110 and His153. Residue Glu154 is part of the active site. Position 157 (His157) interacts with Fe cation.

Belongs to the polypeptide deformylase family. Fe(2+) is required as a cofactor.

It catalyses the reaction N-terminal N-formyl-L-methionyl-[peptide] + H2O = N-terminal L-methionyl-[peptide] + formate. Functionally, removes the formyl group from the N-terminal Met of newly synthesized proteins. Requires at least a dipeptide for an efficient rate of reaction. N-terminal L-methionine is a prerequisite for activity but the enzyme has broad specificity at other positions. The polypeptide is Peptide deformylase 2 (defB) (Bacillus subtilis (strain 168)).